A 167-amino-acid polypeptide reads, in one-letter code: NAD(P)H-quinone oxidoreductase subunit J (167 aa).

Belongs to the complex I 30 kDa subunit family. As to quaternary structure, NDH-1 can be composed of about 15 different subunits; different subcomplexes with different compositions have been identified which probably have different functions.

Its subcellular location is the cellular thylakoid membrane. It catalyses the reaction a plastoquinone + NADH + (n+1) H(+)(in) = a plastoquinol + NAD(+) + n H(+)(out). The enzyme catalyses a plastoquinone + NADPH + (n+1) H(+)(in) = a plastoquinol + NADP(+) + n H(+)(out). In terms of biological role, NDH-1 shuttles electrons from an unknown electron donor, via FMN and iron-sulfur (Fe-S) centers, to quinones in the respiratory and/or the photosynthetic chain. The immediate electron acceptor for the enzyme in this species is believed to be plastoquinone. Couples the redox reaction to proton translocation, and thus conserves the redox energy in a proton gradient. Cyanobacterial NDH-1 also plays a role in inorganic carbon-concentration. The sequence is that of NAD(P)H-quinone oxidoreductase subunit J from Trichodesmium erythraeum (strain IMS101).